Here is a 374-residue protein sequence, read N- to C-terminus: Dispase autolysis-inducing protein (374 aa).

A signal peptide spans 1-26; sequence MKRMGWAVTAAVTTIVLAQSSLAAQA.

It is found in the secreted. In terms of biological role, induces autolysis of dispase and thermolysin. This chain is Dispase autolysis-inducing protein (daip), found in Streptomyces mobaraensis (Streptoverticillium mobaraense).